The primary structure comprises 162 residues: Interleukin-15 (162 aa).

The signal sequence occupies residues 1 to 29 (MRISKPHLRITSIQCYVCLLLNTHFLTEA). Positions 30-48 (GIRVFILGCISAGIPKTEA) are excised as a propeptide. 2 cysteine pairs are disulfide-bonded: C83–C133 and C90–C136. Residues N119, N127, and N143 are each glycosylated (N-linked (GlcNAc...) asparagine).

It belongs to the IL-15/IL-21 family.

The protein localises to the secreted. In terms of biological role, cytokine that plays a major role in the development of inflammatory and protective immune responses to microbial invaders and parasites by modulating immune cells of both the innate and adaptive immune systems. Stimulates the proliferation of natural killer cells, T-cells and B-cells and promotes the secretion of several cytokines. In monocytes, induces the production of IL8 and monocyte chemotactic protein 1/CCL2, two chemokines that attract neutrophils and monocytes respectively to sites of infection. Unlike most cytokines, which are secreted in soluble form, IL15 is expressed in association with its high affinity IL15RA on the surface of IL15-producing cells and delivers signals to target cells that express IL2RB and IL2RG receptor subunits. Binding to its receptor triggers the phosphorylation of JAK1 and JAK3 and the recruitment and subsequent phosphorylation of signal transducer and activator of transcription-3/STAT3 and STAT5. In mast cells, induces the rapid tyrosine phosphorylation of STAT6 and thereby controls mast cell survival and release of cytokines such as IL4. The polypeptide is Interleukin-15 (IL15) (Marmota monax (Woodchuck)).